Reading from the N-terminus, the 158-residue chain is S-ribosylhomocysteine lyase (158 aa).

3 residues coordinate Fe cation: histidine 54, histidine 58, and cysteine 124.

Belongs to the LuxS family. In terms of assembly, homodimer. Fe cation serves as cofactor.

The catalysed reaction is S-(5-deoxy-D-ribos-5-yl)-L-homocysteine = (S)-4,5-dihydroxypentane-2,3-dione + L-homocysteine. In terms of biological role, involved in the synthesis of autoinducer 2 (AI-2) which is secreted by bacteria and is used to communicate both the cell density and the metabolic potential of the environment. The regulation of gene expression in response to changes in cell density is called quorum sensing. Catalyzes the transformation of S-ribosylhomocysteine (RHC) to homocysteine (HC) and 4,5-dihydroxy-2,3-pentadione (DPD). This Lactobacillus johnsonii (strain CNCM I-12250 / La1 / NCC 533) protein is S-ribosylhomocysteine lyase.